The sequence spans 274 residues: Transmembrane O-methyltransferase (274 aa).

Residues 14–34 (VGTMSPAIALAFLPLVVTLLV) form a helical membrane-spanning segment. S-adenosyl-L-methionine is bound by residues E120, 122–123 (GT), S128, E146, and S176.

This sequence belongs to the class I-like SAM-binding methyltransferase superfamily. Cation-dependent O-methyltransferase family. In terms of assembly, interacts with LHFPL5, PCDH15, TMC1, TMC2 and TMIE. Interacts directly with TMC1. The interaction of TOMT with TMC1 and TMC2 is required for the transportation of TMC1/2 into the stereocilia of hair cells.

Its subcellular location is the membrane. The protein resides in the cytoplasm. It localises to the endoplasmic reticulum. The enzyme catalyses a catechol + S-adenosyl-L-methionine = a guaiacol + S-adenosyl-L-homocysteine + H(+). Functionally, catalyzes the O-methylation, and thereby the inactivation, of catecholamine neurotransmitters and catechol hormones. Required for auditory function. Component of the cochlear hair cell's mechanotransduction (MET) machinery. Involved in the assembly of the asymmetric tip-link MET complex. Required for transportation of TMC1 and TMC2 proteins into the mechanically sensitive stereocilia of the hair cells. The function in MET is independent of the enzymatic activity. The chain is Transmembrane O-methyltransferase from Propithecus coquereli (Coquerel's sifaka).